The following is a 194-amino-acid chain: Ribose 1,5-bisphosphate phosphokinase PhnN (194 aa).

24–31 provides a ligand contact to ATP; it reads GPSGAGKD.

This sequence belongs to the ribose 1,5-bisphosphokinase family.

It catalyses the reaction alpha-D-ribose 1,5-bisphosphate + ATP = 5-phospho-alpha-D-ribose 1-diphosphate + ADP. It participates in metabolic intermediate biosynthesis; 5-phospho-alpha-D-ribose 1-diphosphate biosynthesis; 5-phospho-alpha-D-ribose 1-diphosphate from D-ribose 5-phosphate (route II): step 3/3. Catalyzes the phosphorylation of ribose 1,5-bisphosphate to 5-phospho-D-ribosyl alpha-1-diphosphate (PRPP). This chain is Ribose 1,5-bisphosphate phosphokinase PhnN, found in Rhodopseudomonas palustris (strain ATCC BAA-98 / CGA009).